Here is a 273-residue protein sequence, read N- to C-terminus: Formamidopyrimidine-DNA glycosylase (273 aa).

Proline 2 functions as the Schiff-base intermediate with DNA in the catalytic mechanism. The Proton donor role is filled by glutamate 3. Lysine 58 functions as the Proton donor; for beta-elimination activity in the catalytic mechanism. DNA is bound by residues histidine 91, arginine 110, and arginine 153. Residues 238 to 272 form an FPG-type zinc finger; the sequence is KVYGKEGQPCPRCGEDFVKIKICGRGTTYCLHCQK. Residue arginine 262 is the Proton donor; for delta-elimination activity of the active site.

It belongs to the FPG family. Monomer. It depends on Zn(2+) as a cofactor.

It carries out the reaction Hydrolysis of DNA containing ring-opened 7-methylguanine residues, releasing 2,6-diamino-4-hydroxy-5-(N-methyl)formamidopyrimidine.. The enzyme catalyses 2'-deoxyribonucleotide-(2'-deoxyribose 5'-phosphate)-2'-deoxyribonucleotide-DNA = a 3'-end 2'-deoxyribonucleotide-(2,3-dehydro-2,3-deoxyribose 5'-phosphate)-DNA + a 5'-end 5'-phospho-2'-deoxyribonucleoside-DNA + H(+). Involved in base excision repair of DNA damaged by oxidation or by mutagenic agents. Acts as a DNA glycosylase that recognizes and removes damaged bases. Has a preference for oxidized purines, such as 7,8-dihydro-8-oxoguanine (8-oxoG). Has AP (apurinic/apyrimidinic) lyase activity and introduces nicks in the DNA strand. Cleaves the DNA backbone by beta-delta elimination to generate a single-strand break at the site of the removed base with both 3'- and 5'-phosphates. The protein is Formamidopyrimidine-DNA glycosylase of Lactobacillus delbrueckii subsp. bulgaricus (strain ATCC BAA-365 / Lb-18).